Here is a 992-residue protein sequence, read N- to C-terminus: Vacuolar membrane protease (992 aa).

Topologically, residues 1-24 (MSPAMANPRVRKFNPIAFTPLPVT) are cytoplasmic. A helical transmembrane segment spans residues 25 to 45 (FITTIVYLAVLILVLVTYLVV). The Vacuolar portion of the chain corresponds to 46-390 (PPAPTLEMSP…SAFAVFRLHT (345 aa)). N-linked (GlcNAc...) asparagine glycosylation is found at asparagine 59, asparagine 115, and asparagine 118. Zn(2+) is bound by residues histidine 174 and aspartate 186. Residue glutamate 220 is the Proton acceptor of the active site. Glutamate 221 contacts Zn(2+). Asparagine 237 carries an N-linked (GlcNAc...) asparagine glycan. Residues glutamate 246 and histidine 319 each contribute to the Zn(2+) site. Residues 391-411 (LFALSVTLLVIGPLVLFITSI) traverse the membrane as a helical segment. Residues 412-446 (ALSKTDRMYLFSMSKSLGGASETVSLRGLRGLFRT) are Cytoplasmic-facing. A helical transmembrane segment spans residues 447-467 (PIILTVTTVISIGLAYLLEKI). Topologically, residues 468-474 (NPYIVHS) are vacuolar. Residues 475–495 (SQFAVWSMMLSVWIFVAWFLA) form a helical membrane-spanning segment. Topologically, residues 496–508 (RVADFFRPSALHR) are cytoplasmic. The chain crosses the membrane as a helical span at residues 509 to 529 (AYSYTWIFIVTWIMLVISTVY). Over 530 to 533 (ANQK) the chain is Vacuolar. The helical transmembrane segment at 534–554 (GIAAGYFTFFYFAAVFLATWV) threads the bilayer. At 555-671 (SYLELFSLPR…WSWTLPRWTW (117 aa)) the chain is on the cytoplasmic side. The interval 579–620 (RSSSLSSRLLTPSADELPSDIGPNGAENVGDPDETDPTESTS) is disordered. The helical transmembrane segment at 672–692 (ILQLLLLAPIVIILVGQVGLL) threads the bilayer. The Vacuolar portion of the chain corresponds to 693–708 (LTTAMSQIGSDGVSTF). The helical transmembrane segment at 709-729 (IVYLACALFSTLLFAPLLPFI) threads the bilayer. The Cytoplasmic segment spans residues 730–736 (HRFTYHV). A helical transmembrane segment spans residues 737-757 (PIFLLLIFIGTLIYNLVAFPF). Residues 758–992 (SPANRLKIFF…VEASHDFIIQ (235 aa)) lie on the Vacuolar side of the membrane. N-linked (GlcNAc...) asparagine glycans are attached at residues asparagine 805, asparagine 846, and asparagine 954.

It belongs to the peptidase M28 family. It depends on Zn(2+) as a cofactor.

Its subcellular location is the vacuole membrane. Its function is as follows. May be involved in vacuolar sorting and osmoregulation. This chain is Vacuolar membrane protease, found in Paracoccidioides brasiliensis (strain Pb18).